A 153-amino-acid polypeptide reads, in one-letter code: Large ribosomal subunit protein uL30 (153 aa).

Belongs to the universal ribosomal protein uL30 family. Part of the 50S ribosomal subunit.

The protein is Large ribosomal subunit protein uL30 of Metallosphaera sedula (strain ATCC 51363 / DSM 5348 / JCM 9185 / NBRC 15509 / TH2).